The primary structure comprises 593 residues: MSNNNGLIIGIDLGTTNSCVSVMEGAQKVVIENPEGKRTTPSVVSYKNGEIIVGDAAKRQMLTNPNTIVSIKRLMGTSKKVKINDKGVEKELTPEEVSASILSYLKDYAEKKTGQKISRAVITVPAYFNDAERQATKTAGKIAGLTVERIINEPTAAALAYGIDKGHREMKVLVYDLGGGTFDVSLLDIADGTFEVMATAGDNRLGGDDWDNKIIEWIIAEIKKDHPSLDLKSDKMAMQRLKEAAERAKIELSAQLETLISLPFIAVTPEGPVNAELTLSRAKFEELTKDLLERTRNPIADVLKEAKVDPSQVDEILLVGGSTRMPAVQKLVESMIPNKAPNRTINPDEVVAIGAAVQGGVLRGDVKDILLLDVTPLTLAIETLGGVATPIIKRNTTIPVSKSQIFSTAQDNQESVDVSIYQGERPMARENKSLGTFSLGGIQPAPKGKPQIEITFNIDANGILNVKAKDLTTGKENSITISNSSELDENEIQRMIRDAEANKERDAIVKQRIEMRYEGEGIVNTINEILGSKEAEALPAQEKASLTKIVDGINGALKAEKWDELKEQIDGFKKWRDDMSKKYGGGEAPAEPK.

Position 181 is a phosphothreonine; by autocatalysis (threonine 181).

The protein belongs to the heat shock protein 70 family.

In terms of biological role, acts as a chaperone. The sequence is that of Chaperone protein DnaK from Mycoplasmoides gallisepticum (strain R(low / passage 15 / clone 2)) (Mycoplasma gallisepticum).